A 207-amino-acid polypeptide reads, in one-letter code: MARYLGPKAKLSRREGTDLFLKSARRSIADKAKFDSKPGQHGRTSGARTSDYGLQLREKQKVKRMYGVLEKQFRRYFEAAERLKGNTGANLLGLLECRLDNVVYRMGFGSTRAEARQLVSHKAITVNGQSVNIASYLVKAGDVVAVREKSKKQARIVEALQLAQQVGMPVWVEVNADKVEGTFKKVPDRDEFGADINESLIVELYSR.

The disordered stretch occupies residues 31–53 (KAKFDSKPGQHGRTSGARTSDYG). The region spanning 97–157 (CRLDNVVYRM…EKSKKQARIV (61 aa)) is the S4 RNA-binding domain.

It belongs to the universal ribosomal protein uS4 family. Part of the 30S ribosomal subunit. Contacts protein S5. The interaction surface between S4 and S5 is involved in control of translational fidelity.

Its function is as follows. One of the primary rRNA binding proteins, it binds directly to 16S rRNA where it nucleates assembly of the body of the 30S subunit. In terms of biological role, with S5 and S12 plays an important role in translational accuracy. This Acidovorax ebreus (strain TPSY) (Diaphorobacter sp. (strain TPSY)) protein is Small ribosomal subunit protein uS4.